Reading from the N-terminus, the 172-residue chain is Type II secretion system protein H (172 aa).

A propeptide spans 1-6 (MRASRG) (leader sequence). F7 carries the N-methylphenylalanine modification. A helical transmembrane segment spans residues 7 to 27 (FTLIELMVVMVIISVLIGLAV).

The protein belongs to the GSP H family. Type II secretion is composed of four main components: the outer membrane complex, the inner membrane complex, the cytoplasmic secretion ATPase and the periplasm-spanning pseudopilus. Forms the tip of the type II pseudopilus by interacting with XcpV, XcpW and XcpX. Interacts with core component XcpT. Cleaved by prepilin peptidase. Post-translationally, methylated by prepilin peptidase at the amino group of the N-terminal phenylalanine once the leader sequence is cleaved by prepilin peptidase.

The protein localises to the cell inner membrane. Component of the type II secretion system required for the energy-dependent secretion of extracellular factors such as proteases and toxins from the periplasm. Part of the pseudopilus tip complex that is critical for the recognition and binding of secretion substrates. Type II pseudopilus confers increased bacterial adhesive capabilities. The polypeptide is Type II secretion system protein H (xcpU) (Pseudomonas aeruginosa (strain ATCC 15692 / DSM 22644 / CIP 104116 / JCM 14847 / LMG 12228 / 1C / PRS 101 / PAO1)).